The chain runs to 285 residues: 2-dehydro-3-deoxyphosphooctonate aldolase (285 aa).

It belongs to the KdsA family.

The protein resides in the cytoplasm. It catalyses the reaction D-arabinose 5-phosphate + phosphoenolpyruvate + H2O = 3-deoxy-alpha-D-manno-2-octulosonate-8-phosphate + phosphate. The protein operates within carbohydrate biosynthesis; 3-deoxy-D-manno-octulosonate biosynthesis; 3-deoxy-D-manno-octulosonate from D-ribulose 5-phosphate: step 2/3. It functions in the pathway bacterial outer membrane biogenesis; lipopolysaccharide biosynthesis. The sequence is that of 2-dehydro-3-deoxyphosphooctonate aldolase from Bordetella bronchiseptica (strain ATCC BAA-588 / NCTC 13252 / RB50) (Alcaligenes bronchisepticus).